The sequence spans 292 residues: MNFQSVIATLNQFWADRGCLIAQPYDTEKGAGTMNPHTFLRAIGPEPWAVAYVEPCRRPTDGRYGENPNRYQHYYQYQVLIKPSPEGIQETYLDSLRALGIQPEEHDIRFVEDNWESPTLGAWGVGWEVWLDGMEVAQFTYFQQCGGIDCRPVSIEITYGLERLAMYLQNVEAFTEIKWTDRLSYGDVHLQSEIEQCTYNFEASTPELLFQLFGLYEQEATQLIEKGLVHPSLDYVLKCSHSFNLLDARGLISVTERTRYIGRIRNMARQVAKLYLEQREQLGFPLLQKVTA.

Belongs to the class-II aminoacyl-tRNA synthetase family. In terms of assembly, tetramer of two alpha and two beta subunits.

It localises to the cytoplasm. The enzyme catalyses tRNA(Gly) + glycine + ATP = glycyl-tRNA(Gly) + AMP + diphosphate. This is Glycine--tRNA ligase alpha subunit from Synechococcus sp. (strain ATCC 27144 / PCC 6301 / SAUG 1402/1) (Anacystis nidulans).